The primary structure comprises 131 residues: Holo-[acyl-carrier-protein] synthase (131 aa).

Asp-8 and Glu-57 together coordinate Mg(2+).

Belongs to the P-Pant transferase superfamily. AcpS family. Mg(2+) is required as a cofactor.

It localises to the cytoplasm. It carries out the reaction apo-[ACP] + CoA = holo-[ACP] + adenosine 3',5'-bisphosphate + H(+). Transfers the 4'-phosphopantetheine moiety from coenzyme A to a Ser of acyl-carrier-protein. This chain is Holo-[acyl-carrier-protein] synthase, found in Desulforudis audaxviator (strain MP104C).